Consider the following 178-residue polypeptide: Nuclear transcription factor Y subunit B-2 (178 aa).

Residues 39-45 mediate DNA binding; that stretch reads LPIANIS. The tract at residues 66-77 is subunit association domain (SAD); it reads LQECVSEFISFV. The interval 131 to 156 is disordered; sequence SSKAGDGSVKKDTIGPHSGASSSSAQ.

This sequence belongs to the NFYB/HAP3 subunit family. In terms of assembly, heterotrimeric transcription factor composed of three components, NF-YA, NF-YB and NF-YC. NF-YB and NF-YC must interact and dimerize for NF-YA association and DNA binding. Interacts with NFYC4 and NFYC6. In terms of tissue distribution, ubiquitous.

The protein localises to the nucleus. Component of the NF-Y/HAP transcription factor complex. The NF-Y complex stimulates the transcription of various genes by recognizing and binding to a CCAAT motif in promoters. May regulate the expression of photosynthetic genes, and may be involved in chloroplast and amyloplast development. The sequence is that of Nuclear transcription factor Y subunit B-2 (NFYB2) from Oryza sativa subsp. japonica (Rice).